A 702-amino-acid polypeptide reads, in one-letter code: Elongation factor G 2 (702 aa).

Positions E8 to V290 constitute a tr-type G domain. GTP contacts are provided by residues A17–T24, D88–H92, and N142–D145.

It belongs to the TRAFAC class translation factor GTPase superfamily. Classic translation factor GTPase family. EF-G/EF-2 subfamily.

The protein localises to the cytoplasm. Its function is as follows. Catalyzes the GTP-dependent ribosomal translocation step during translation elongation. During this step, the ribosome changes from the pre-translocational (PRE) to the post-translocational (POST) state as the newly formed A-site-bound peptidyl-tRNA and P-site-bound deacylated tRNA move to the P and E sites, respectively. Catalyzes the coordinated movement of the two tRNA molecules, the mRNA and conformational changes in the ribosome. The chain is Elongation factor G 2 from Cupriavidus metallidurans (strain ATCC 43123 / DSM 2839 / NBRC 102507 / CH34) (Ralstonia metallidurans).